A 421-amino-acid chain; its full sequence is 4-hydroxy-3-methylbut-2-en-1-yl diphosphate synthase (flavodoxin) (421 aa).

The [4Fe-4S] cluster site is built by cysteine 311, cysteine 314, cysteine 357, and glutamate 364.

This sequence belongs to the IspG family. Requires [4Fe-4S] cluster as cofactor.

The catalysed reaction is (2E)-4-hydroxy-3-methylbut-2-enyl diphosphate + oxidized [flavodoxin] + H2O + 2 H(+) = 2-C-methyl-D-erythritol 2,4-cyclic diphosphate + reduced [flavodoxin]. The protein operates within isoprenoid biosynthesis; isopentenyl diphosphate biosynthesis via DXP pathway; isopentenyl diphosphate from 1-deoxy-D-xylulose 5-phosphate: step 5/6. Functionally, converts 2C-methyl-D-erythritol 2,4-cyclodiphosphate (ME-2,4cPP) into 1-hydroxy-2-methyl-2-(E)-butenyl 4-diphosphate. The polypeptide is 4-hydroxy-3-methylbut-2-en-1-yl diphosphate synthase (flavodoxin) (Xanthomonas axonopodis pv. citri (strain 306)).